Here is a 574-residue protein sequence, read N- to C-terminus: MNQTRVFLIFAWLMVAALLWMEWGKEKAAANAPGAAATQSVPAARDLDAATPSAANVPAAQAIPQAGAPGKVPATSTTTATPAAAGTAPVVTLTSDVLRLKLDGRSVLDAELLQFPQTKDGTAPVSLLTEDAAHPYNATSGWASEHSPVPGVGGFRAEQPGTTFELAKGQNTLVVPFVWNGPNGVSIRRTFTLERGRYAISIKDEVINKSAAPWNGYVFRKLSRVPTILSRGMTNPDSFSFNGATWYSPQAGYERRAFKDYMDDGGLNRQITGGWIALLQHHFFTAWIPQNDQASLYVLNKDGPRDVAELRGPAFTVAPGQTATTEARLWVGPKLVSLIAKEDVKGLDRVIDYSRFSIMAIIGQGLFWVLSHLHSFLHNWGWAIVGLVVLLRLVLYPLSSAQYKSSAKMRKFQPRLAQLKERYGDDRVKYQQATMELFKKEKINPMGGCLPLLIQMPIFFALYWVLVESVELRQAPWLGWIQDLTARDPHFILPALNIAIMWATQKLTPTPGIDPMQAKMMQFMPLVFGAMMAFVPSGLVLYWVVNGGLNLLIQWWMIRQHGEKPSKIIRANAK.

The helical transmembrane segment at Val6–Glu26 threads the bilayer. The tract at residues Gln65 to Ala85 is disordered. The next 5 helical transmembrane spans lie at Val350 to Leu370, Phe376 to Tyr396, Gly447 to Val467, Phe491 to Pro511, and Pro525 to Val545.

Belongs to the OXA1/ALB3/YidC family. Type 1 subfamily. Interacts with the Sec translocase complex via SecD. Specifically interacts with transmembrane segments of nascent integral membrane proteins during membrane integration.

The protein resides in the cell inner membrane. Required for the insertion and/or proper folding and/or complex formation of integral membrane proteins into the membrane. Involved in integration of membrane proteins that insert both dependently and independently of the Sec translocase complex, as well as at least some lipoproteins. Aids folding of multispanning membrane proteins. This is Membrane protein insertase YidC from Xanthomonas oryzae pv. oryzae (strain PXO99A).